We begin with the raw amino-acid sequence, 293 residues long: Zinc metalloproteinase nas-2 (293 aa).

Residues 1–17 (MIFPLLLTLILPNFVAP) form the signal peptide. A propeptide spanning residues 18–67 (KVLEPEKDDEIAVSTQREKTFFDMKLILTKLPTFEPSKYGHINIPLRKKR) is cleaved from the precursor. The 194-residue stretch at 67–260 (RGIALHPLQW…ININTFYKCK (194 aa)) folds into the Peptidase M12A domain. N-linked (GlcNAc...) asparagine glycosylation occurs at Asn-111. Intrachain disulfides connect Cys-114–Cys-259 and Cys-139–Cys-169. Position 180 (His-180) interacts with Zn(2+). Glu-181 is an active-site residue. Residues His-184 and His-190 each contribute to the Zn(2+) site. Asn-287 carries an N-linked (GlcNAc...) asparagine glycan.

Requires Zn(2+) as cofactor.

Its subcellular location is the secreted. In terms of biological role, metalloprotease. This chain is Zinc metalloproteinase nas-2 (nas-2), found in Caenorhabditis elegans.